The following is a 301-amino-acid chain: GTPase Era (301 aa).

The region spanning 4–173 (KAGFVALIGK…LECISKHLNP (170 aa)) is the Era-type G domain. Residues 12–19 (GKPNAGKS) are G1. 12–19 (GKPNAGKS) contributes to the GTP binding site. A G2 region spans residues 38–42 (NATRK). Residues 64–67 (DTPG) form a G3 region. Residues 64–68 (DTPGL) and 122–125 (SKID) each bind GTP. Residues 122 to 125 (SKID) are G4. Residues 152–154 (LSA) form a G5 region. The KH type-2 domain maps to 204-280 (LSDEIPYESD…FLNLQVIAQK (77 aa)).

Belongs to the TRAFAC class TrmE-Era-EngA-EngB-Septin-like GTPase superfamily. Era GTPase family. Monomer.

The protein resides in the cytoplasm. Its subcellular location is the cell inner membrane. Functionally, an essential GTPase that binds both GDP and GTP, with rapid nucleotide exchange. Plays a role in 16S rRNA processing and 30S ribosomal subunit biogenesis and possibly also in cell cycle regulation and energy metabolism. This is GTPase Era from Helicobacter pylori (strain P12).